A 627-amino-acid chain; its full sequence is Alpha-terpineol synthase, chloroplastic (627 aa).

The N-terminal 53 residues, 1-53, are a transit peptide targeting the chloroplast; that stretch reads MAGITGVMNMKLAARPSSGRHSRGCRPAVVPSAGKQMLLVRRHPPGSASWPTR. Residues 13 to 90 are disordered; the sequence is AARPSSGRHS…EDRASRNTSS (78 aa). The (2E)-geranyl diphosphate site is built by R339, D376, D380, R518, and D521. 2 residues coordinate Mg(2+): D376 and D380. The short motif at 376–380 is the DDXXD motif element; the sequence is DDTYD. Positions 521, 525, and 529 each coordinate Mg(2+).

It belongs to the terpene synthase family. Tpsb subfamily. As to quaternary structure, monomer. Mg(2+) is required as a cofactor. Requires Mn(2+) as cofactor. In terms of tissue distribution, expressed in seedling leaf sheaths and roots.

The protein localises to the plastid. Its subcellular location is the chloroplast. It carries out the reaction (2E)-geranyl diphosphate + H2O = (S)-alpha-terpineol + diphosphate. The catalysed reaction is (2E)-geranyl diphosphate = (4S)-limonene + diphosphate. The enzyme catalyses (2E)-geranyl diphosphate = gamma-terpinene + diphosphate. It catalyses the reaction (2E)-geranyl diphosphate = beta-myrcene + diphosphate. It carries out the reaction (2E)-geranyl diphosphate = terpinolene + diphosphate. The catalysed reaction is (2E)-geranyl diphosphate + H2O = 4-terpineol + diphosphate. Its pathway is secondary metabolite biosynthesis; terpenoid biosynthesis. Component of the volatile terpenes biosynthesis pathways. Mediates the synthesis of a blend of monoterpenes. Converts mainly geranyl diphosphate to alpha-terpineol. Also triggers the biosynthesis of minor monoterpenes including limonene, gamma-terpinene, beta-myrcene, terpinolene and 4-terpineol. In Zea mays (Maize), this protein is Alpha-terpineol synthase, chloroplastic.